The chain runs to 510 residues: Glycosyl hydrolase YngK (510 aa).

Positions 1 to 30 are cleaved as a signal peptide; it reads MKVCQKSIVRFLVSLIIGTFVISVPFMANA.

Belongs to the glycosyl hydrolase-like 10 (GHL10) family.

In Bacillus subtilis (strain 168), this protein is Glycosyl hydrolase YngK (yngK).